Consider the following 939-residue polypeptide: MGQACGHSILCRSQQYPAARPAEPRGQQVFLKPDEPPPQPCADSLQDALLSLGAVIDIAGLRQAARDALSAVLPKVETVYTYLLDGESRLVCEDPPHELPQEGKIREAVISQKRLSCNGLGPSDLLGKPLARLVAPLAPDMQVLVIPLLDKETGSVAAVILVHCGQLSDSEEQSLQVVEKHALVALRRVQALQQRRPEAVQNTSVDASEDQKDEKGYTDHDRKILQLCGELFDLDATSLQLKVLQYLQQETQATHCCLLLVSEDNLQLSCKVIGDKVLGEEVSFPLTMGRLGQVVEDKQCIQLKDLTSDDVQQLQNMLGCELQAMLCVPVISRATDQVVALACAFNKLGGDFPTSSFTDEDEHVIQHCFHYTGTVLTSTLAFQKEQKLKCECQALLQVAKNLFTHLDDVSVLLQEIITEARNLSNAEICSVFLLDQNELVAKVFDGGVVDDESYEIRIPADQGIAGHVATTGQILNIPDAYAHPLFYRGVDDSTGFRTRNILCFPIKNENQEVIGVAELVNKINGPWFSKFDEDLATAFSIYCGISIAHSLLYKKVNEAQYRSHLANEMMMYHMKVSDDEYTKLLHDGIQPVAAIDSNFANFTYTPRSLPEDDTSMAILSMLQDMNFINNYKIDCPTLARFCLMVKKGYRDPPYHNWMHAFSVSHFCYLLYKNLELSNYLEDIEIFALFISCMCHDLDHRGTNNSFQVASKSVLAALYSSEGSVMERHHFAQAIAILNTHGCNIFDHFSRKDYQRMLDLMRDIILATDLAHHLRIFKDLQKMAEVGYDRNNRQHHRLLLCLLMTSCDLSDQTKGWKTTRKIAELIYKEFFSQGDLEKAMGNRPMEMMDREKAYIPELQISFMEHIAMPIYKLLQDLFPKAAELYERVASNREHWTKVSHKFTIRGLPSNNSLDFLDEEYEVPDLDGTRAPVNGCCSLEG.

Residue G2 is the site of N-myristoyl glycine attachment. 2 S-palmitoyl cysteine lipidation sites follow: C5 and C11. The tract at residues 16–38 is disordered; it reads YPAARPAEPRGQQVFLKPDEPPP. Position 116 is a phosphoserine (S116). The disordered stretch occupies residues 197–217; that stretch reads PEAVQNTSVDASEDQKDEKGY. 2 consecutive GAF domains span residues 236-373 and 408-547; these read ATSL…HYTG and DVSV…GISI. 3',5'-cyclic GMP contacts are provided by S430, D445, I464, Y487, and T498. The region spanning 577–901 is the PDEase domain; sequence SDDEYTKLLH…EHWTKVSHKF (325 aa). The active-site Proton donor is the H655. Residues H659, H695, D696, and D807 each coordinate Zn(2+). D696 contributes to the Mg(2+) binding site.

The protein belongs to the cyclic nucleotide phosphodiesterase family. PDE2 subfamily. Homodimer. Requires Zn(2+) as cofactor. Mg(2+) serves as cofactor. In terms of tissue distribution, expressed in brain and liver (at protein level).

The protein resides in the cytoplasm. Its subcellular location is the mitochondrion matrix. It localises to the mitochondrion inner membrane. It is found in the mitochondrion outer membrane. The protein localises to the cell membrane. It catalyses the reaction a nucleoside 3',5'-cyclic phosphate + H2O = a nucleoside 5'-phosphate + H(+). It carries out the reaction 3',5'-cyclic GMP + H2O = GMP + H(+). The enzyme catalyses 3',5'-cyclic AMP + H2O = AMP + H(+). Its activity is regulated as follows. The 3',5'-cyclic-AMP phosphodiesterase activity is stimulated by 3',5'-cyclic GMP. Specifically inhibited by Bay 60-7550. Functionally, cGMP-activated cyclic nucleotide phosphodiesterase with a dual-specificity for the second messengers cAMP and cGMP, which are key regulators of many important physiological processes. Has a higher efficiency with cGMP compared to cAMP. Plays a role in cell growth and migration. Regulates mitochondrial cAMP levels and respiration. Involved in the regulation of mitochondria morphology/dynamics and apoptotic cell death via local modulation of cAMP/PKA signaling in the mitochondrion, including the monitoring of local cAMP levels at the outer mitochondrial membrane and of PKA-dependent phosphorylation of DNM1L. This Mus musculus (Mouse) protein is cGMP-dependent 3',5'-cyclic phosphodiesterase.